The primary structure comprises 643 residues: Transducer protein Htr8 (643 aa).

5 consecutive transmembrane segments (helical) span residues 48-68 (VFVL…GTES), 79-99 (PGIL…LASI), 115-134 (VLAS…EAHF), 149-169 (WLPF…FGMI), and 184-204 (PWVW…ALMA). An HAMP domain is found at 273 to 326 (ERLEATANTYGAAMARAADGDLSVRLDPDVENDAMAAIAASFNEMLDETETTIR). One can recognise a Methyl-accepting transducer domain in the interval 345-581 (GVVEIEDASG…EAVSMIAEVS (237 aa)).

It belongs to the methyl-accepting chemotaxis (MCP) protein family. Methylated by CheR.

The protein localises to the cell membrane. Its function is as follows. Potentially involved in chemo- or phototactic signal transduction. This Halobacterium salinarum (strain ATCC 29341 / DSM 671 / R1) protein is Transducer protein Htr8 (htr8).